The following is a 419-amino-acid chain: UDP-N-acetylglucosamine 1-carboxyvinyltransferase (419 aa).

22 to 23 (KN) serves as a coordination point for phosphoenolpyruvate. R93 lines the UDP-N-acetyl-alpha-D-glucosamine pocket. C117 serves as the catalytic Proton donor. C117 bears the 2-(S-cysteinyl)pyruvic acid O-phosphothioketal mark. The UDP-N-acetyl-alpha-D-glucosamine site is built by D307 and I329.

The protein belongs to the EPSP synthase family. MurA subfamily.

It is found in the cytoplasm. The catalysed reaction is phosphoenolpyruvate + UDP-N-acetyl-alpha-D-glucosamine = UDP-N-acetyl-3-O-(1-carboxyvinyl)-alpha-D-glucosamine + phosphate. It functions in the pathway cell wall biogenesis; peptidoglycan biosynthesis. Cell wall formation. Adds enolpyruvyl to UDP-N-acetylglucosamine. The polypeptide is UDP-N-acetylglucosamine 1-carboxyvinyltransferase (Pseudoalteromonas atlantica (strain T6c / ATCC BAA-1087)).